The chain runs to 775 residues: MPLLHTLNTALAVGLLGARYYPEVQTFLGLPDYVGHMKNVVRSVFQGSGLVVVSSDTVGVRGTYSNRGQIGSSLGCILAVPDSGADIEIDLDRLVGTEEEATSCLVEAVGSTADVPRRRVRQKGRFAMHAVNAAKLHFCGVPKPTEANRLAVSKWLVQYCKERHVVDSHIRTIVNTALPRVFTPDAEDIQVVLDLHSVRAHDHRNALAEAGKVRKWWVNLAMHPMTGRSWSRAWRRLCRLPDDQAISFVRXGCLRELVGRETQISRGENPAMRVFPLANPPKVRRIFHICGMGNGLDFGVHNNSLNNLRRGLMERVFYVEDAQKQLKPAPQPIPGIFGKLSGIRRRLVRLAGNHTPVPREKYPSFYKGRRATIYQKALDSLHDRPVSRKDAELKTFVKAEKINFTAKKDPAPRVIQPRDPRYNIEVGKYLKPYEHHLYRAIDAMWGGPTVLKGYDVGELGNIMSNTWDKFRKTCAIGFDMKRFDQHVSVDALRWEHSVYNAGFNCPELAQLLTWQLTNKGVGRASDGFIKYQVDGCRMSGDVNTALGNCLLACSITKYLMKGIKCKLINNGDDCVLFFEADEVDRVRERLHHWIDFGFQCIAEEPQYELEKVEFCQMSPIFDGEGWVMVRNPRVSLSKDSYSTTQWANEKDAARWLAAIGECGLAIAGGVPVLQSYYSCLKRNFGPLAGDYKKKMQDVSFDSGFYRLSKNGMRGSKDVSQDARFSFYRGFGYTPDEQEALEEYYDNLQLLCEWDPTGYKEELSDRWILNEFPTTL.

The region spanning 473-586 (TCAIGFDMKR…FFEADEVDRV (114 aa)) is the RdRp catalytic domain.

The catalysed reaction is RNA(n) + a ribonucleoside 5'-triphosphate = RNA(n+1) + diphosphate. Functionally, RNA-dependent RNA polymerase that plays an essential role in the virus replication. The chain is RNA-directed RNA polymerase from Brassica napus subsp. rapifera (Purple mistress).